The following is a 495-amino-acid chain: 3-octaprenyl-4-hydroxybenzoate carboxy-lyase (495 aa).

Asn-172 provides a ligand contact to Mn(2+). Residues Ile-175–Arg-177, Arg-189–Leu-191, and Arg-194–Gly-195 contribute to the prenylated FMN site. Mn(2+) is bound at residue Glu-238. Asp-287 serves as the catalytic Proton donor.

Belongs to the UbiD family. Homohexamer. Prenylated FMN serves as cofactor. It depends on Mn(2+) as a cofactor.

The protein resides in the cell membrane. The catalysed reaction is a 4-hydroxy-3-(all-trans-polyprenyl)benzoate + H(+) = a 2-(all-trans-polyprenyl)phenol + CO2. It functions in the pathway cofactor biosynthesis; ubiquinone biosynthesis. Functionally, catalyzes the decarboxylation of 3-octaprenyl-4-hydroxy benzoate to 2-octaprenylphenol, an intermediate step in ubiquinone biosynthesis. The sequence is that of 3-octaprenyl-4-hydroxybenzoate carboxy-lyase from Yersinia enterocolitica serotype O:8 / biotype 1B (strain NCTC 13174 / 8081).